The following is a 428-amino-acid chain: Histidine--tRNA ligase (428 aa).

This sequence belongs to the class-II aminoacyl-tRNA synthetase family. Homodimer.

It is found in the cytoplasm. The catalysed reaction is tRNA(His) + L-histidine + ATP = L-histidyl-tRNA(His) + AMP + diphosphate + H(+). In Staphylococcus carnosus (strain TM300), this protein is Histidine--tRNA ligase.